The following is a 92-amino-acid chain: Small ribosomal subunit protein uS19 (92 aa).

Belongs to the universal ribosomal protein uS19 family.

Functionally, protein S19 forms a complex with S13 that binds strongly to the 16S ribosomal RNA. The protein is Small ribosomal subunit protein uS19 of Macrococcus caseolyticus (strain JCSC5402) (Macrococcoides caseolyticum).